We begin with the raw amino-acid sequence, 193 residues long: Ion-translocating oxidoreductase complex subunit B (193 aa).

The segment at 1–26 (MSTMLIAVILLTLLALFFGVLLGFAA) is hydrophobic. The region spanning 32–90 (EGNPIVDELEAILPQTQCGQCGYPGCRPYAEAIANGDKVNKCPPGGTATMEKLASLMGV) is the 4Fe-4S domain. 12 residues coordinate [4Fe-4S] cluster: Cys-49, Cys-52, Cys-57, Cys-73, Cys-114, Cys-117, Cys-120, Cys-124, Cys-144, Cys-147, Cys-150, and Cys-154. 2 4Fe-4S ferredoxin-type domains span residues 105 to 134 (KVAY…GAGK) and 136 to 164 (MHTV…MVPV).

The protein belongs to the 4Fe4S bacterial-type ferredoxin family. RnfB subfamily. In terms of assembly, the complex is composed of six subunits: RnfA, RnfB, RnfC, RnfD, RnfE and RnfG. [4Fe-4S] cluster is required as a cofactor.

It localises to the cell inner membrane. Functionally, part of a membrane-bound complex that couples electron transfer with translocation of ions across the membrane. This is Ion-translocating oxidoreductase complex subunit B from Shewanella oneidensis (strain ATCC 700550 / JCM 31522 / CIP 106686 / LMG 19005 / NCIMB 14063 / MR-1).